Here is a 587-residue protein sequence, read N- to C-terminus: Heavy metal-associated isoprenylated plant protein 33 (587 aa).

An HMA domain is found at Ile9–Glu72. Residues Cys20 and Cys23 each contribute to the a metal cation site. Disordered stretches follow at residues Gln98–Pro146, Leu176–Met261, Ala287–Asn449, Pro462–Gln504, and Tyr532–Met587. 2 stretches are compositionally biased toward gly residues: residues Lys104 to Pro113 and Lys121 to Pro140. Over residues Pro194–Lys208 the composition is skewed to low complexity. Over residues Pro215 to Asp248 the composition is skewed to acidic residues. Gly residues-rich tracts occupy residues Asn290–Lys300, Met312–Pro419, and Gly428–Gly445. Positions Ser471–Val483 are enriched in low complexity. Composition is skewed to pro residues over residues Arg534–Gln547 and Tyr554–Pro565. The span at Asp578–Met587 shows a compositional bias: polar residues. At Cys584 the chain carries Cysteine methyl ester. A lipid anchor (S-farnesyl cysteine) is attached at Cys584. The propeptide at Asn585–Met587 is removed in mature form.

This sequence belongs to the HIPP family.

Heavy-metal-binding protein. In Arabidopsis thaliana (Mouse-ear cress), this protein is Heavy metal-associated isoprenylated plant protein 33.